A 79-amino-acid polypeptide reads, in one-letter code: uncharacterized protein (79 aa).

This is an uncharacterized protein from Escherichia coli (Bacteriophage T4).